Consider the following 545-residue polypeptide: Glucose-6-phosphate isomerase (545 aa).

Glu-351 (proton donor) is an active-site residue. Residues His-382 and Lys-510 contribute to the active site.

This sequence belongs to the GPI family.

It is found in the cytoplasm. The catalysed reaction is alpha-D-glucose 6-phosphate = beta-D-fructose 6-phosphate. Its pathway is carbohydrate biosynthesis; gluconeogenesis. The protein operates within carbohydrate degradation; glycolysis; D-glyceraldehyde 3-phosphate and glycerone phosphate from D-glucose: step 2/4. In terms of biological role, catalyzes the reversible isomerization of glucose-6-phosphate to fructose-6-phosphate. The polypeptide is Glucose-6-phosphate isomerase (Shewanella pealeana (strain ATCC 700345 / ANG-SQ1)).